The following is a 390-amino-acid chain: Anhydro-N-acetylmuramic acid kinase (390 aa).

9-16 (GTSLDGID) contributes to the ATP binding site.

This sequence belongs to the anhydro-N-acetylmuramic acid kinase family.

The catalysed reaction is 1,6-anhydro-N-acetyl-beta-muramate + ATP + H2O = N-acetyl-D-muramate 6-phosphate + ADP + H(+). It participates in amino-sugar metabolism; 1,6-anhydro-N-acetylmuramate degradation. The protein operates within cell wall biogenesis; peptidoglycan recycling. Functionally, catalyzes the specific phosphorylation of 1,6-anhydro-N-acetylmuramic acid (anhMurNAc) with the simultaneous cleavage of the 1,6-anhydro ring, generating MurNAc-6-P. Is required for the utilization of anhMurNAc either imported from the medium or derived from its own cell wall murein, and thus plays a role in cell wall recycling. This is Anhydro-N-acetylmuramic acid kinase from Bacillus cereus (strain ATCC 14579 / DSM 31 / CCUG 7414 / JCM 2152 / NBRC 15305 / NCIMB 9373 / NCTC 2599 / NRRL B-3711).